The primary structure comprises 331 residues: Ornithine carbamoyltransferase (331 aa).

Residues 55-58, Gln82, Arg106, and 133-136 contribute to the carbamoyl phosphate site; these read STRT and HPTQ. L-ornithine is bound by residues Asn166, Asp230, and 234–235; that span reads SM. Residues 272-273 and Arg317 contribute to the carbamoyl phosphate site; that span reads CL.

This sequence belongs to the aspartate/ornithine carbamoyltransferase superfamily. OTCase family.

It is found in the cytoplasm. It catalyses the reaction carbamoyl phosphate + L-ornithine = L-citrulline + phosphate + H(+). The protein operates within amino-acid biosynthesis; L-arginine biosynthesis; L-arginine from L-ornithine and carbamoyl phosphate: step 1/3. In terms of biological role, reversibly catalyzes the transfer of the carbamoyl group from carbamoyl phosphate (CP) to the N(epsilon) atom of ornithine (ORN) to produce L-citrulline. This chain is Ornithine carbamoyltransferase (argF), found in Neisseria meningitidis serogroup A / serotype 4A (strain DSM 15465 / Z2491).